Reading from the N-terminus, the 265-residue chain is Imidazole glycerol phosphate synthase subunit HisF (265 aa).

Residues Asp17 and Asp136 contribute to the active site.

Belongs to the HisA/HisF family. Heterodimer of HisH and HisF.

Its subcellular location is the cytoplasm. It carries out the reaction 5-[(5-phospho-1-deoxy-D-ribulos-1-ylimino)methylamino]-1-(5-phospho-beta-D-ribosyl)imidazole-4-carboxamide + L-glutamine = D-erythro-1-(imidazol-4-yl)glycerol 3-phosphate + 5-amino-1-(5-phospho-beta-D-ribosyl)imidazole-4-carboxamide + L-glutamate + H(+). It participates in amino-acid biosynthesis; L-histidine biosynthesis; L-histidine from 5-phospho-alpha-D-ribose 1-diphosphate: step 5/9. Its function is as follows. IGPS catalyzes the conversion of PRFAR and glutamine to IGP, AICAR and glutamate. The HisF subunit catalyzes the cyclization activity that produces IGP and AICAR from PRFAR using the ammonia provided by the HisH subunit. The polypeptide is Imidazole glycerol phosphate synthase subunit HisF (Mycobacterium avium (strain 104)).